Consider the following 489-residue polypeptide: Blue-light-activated histidine kinase (489 aa).

The PAS domain occupies 19–93 (ATDPFRAAVE…AIKSAIAAEK (75 aa)). An S-4a-FMN cysteine modification is found at Cys-69. PAC domains lie at 93–147 (KPID…ELEK) and 232–281 (YSIE…NKAL). Residues 259–341 (NPLVLGIVQD…LLKENWAGAT (83 aa)) are HWE histidine kinase domain. His-288 is modified (phosphohistidine; by autocatalysis).

Post-translationally, FMN binds covalently to cysteine after exposure to blue light and this bond is spontaneously broken in the dark.

It carries out the reaction ATP + protein L-histidine = ADP + protein N-phospho-L-histidine.. In terms of biological role, photosensitive kinase that is involved in increased bacterial virulence upon exposure to light. Once ejected from an infected animal host, sunlight acts as an environmental signal that increases the virulence of the bacterium, preparing it for infection of the next host. This photoreceptor protein is directly related to the bacterium's survival and replication within host macrophages. This is Blue-light-activated histidine kinase from Brucella ovis (strain ATCC 25840 / 63/290 / NCTC 10512).